A 137-amino-acid polypeptide reads, in one-letter code: Ribonuclease P protein component (137 aa).

The protein belongs to the RnpA family. Consists of a catalytic RNA component (M1 or rnpB) and a protein subunit.

It carries out the reaction Endonucleolytic cleavage of RNA, removing 5'-extranucleotides from tRNA precursor.. RNaseP catalyzes the removal of the 5'-leader sequence from pre-tRNA to produce the mature 5'-terminus. It can also cleave other RNA substrates such as 4.5S RNA. The protein component plays an auxiliary but essential role in vivo by binding to the 5'-leader sequence and broadening the substrate specificity of the ribozyme. The sequence is that of Ribonuclease P protein component from Porphyromonas gingivalis (strain ATCC 33277 / DSM 20709 / CIP 103683 / JCM 12257 / NCTC 11834 / 2561).